Reading from the N-terminus, the 453-residue chain is Homogentisate 1,2-dioxygenase (453 aa).

The span at 1 to 12 (MLEKAERQRKAA) shows a compositional bias: basic and acidic residues. The segment at 1 to 43 (MLEKAERQRKAAPDQQRSAGYMPGFGNDFETESLPGSLPQGQN) is disordered. Catalysis depends on H306, which acts as the Proton acceptor. H349 and E355 together coordinate Fe cation. The homogentisate site is built by Y364 and H385. H385 is a binding site for Fe cation.

The protein belongs to the homogentisate dioxygenase family. Hexamer; dimer of trimers. It depends on Fe cation as a cofactor.

The catalysed reaction is homogentisate + O2 = 4-maleylacetoacetate + H(+). The protein operates within amino-acid degradation; L-phenylalanine degradation; acetoacetate and fumarate from L-phenylalanine: step 4/6. In terms of biological role, involved in the catabolism of homogentisate (2,5-dihydroxyphenylacetate or 2,5-OH-PhAc), a central intermediate in the degradation of phenylalanine and tyrosine. Catalyzes the oxidative ring cleavage of the aromatic ring of homogentisate to yield maleylacetoacetate. The sequence is that of Homogentisate 1,2-dioxygenase from Sinorhizobium medicae (strain WSM419) (Ensifer medicae).